The following is a 224-amino-acid chain: Ankyrin repeat domain-containing protein 45 (224 aa).

2 ANK repeats span residues V46 to E76 and R80 to A109.

Widely expressed.

The protein resides in the cytoplasm. It localises to the midbody. Its subcellular location is the midbody ring. It is found in the cleavage furrow. May play a role during cell division. The polypeptide is Ankyrin repeat domain-containing protein 45 (Danio rerio (Zebrafish)).